We begin with the raw amino-acid sequence, 145 residues long: UPF0201 protein LS215_1276 (145 aa).

The protein belongs to the UPF0201 family.

The chain is UPF0201 protein LS215_1276 from Saccharolobus islandicus (strain L.S.2.15 / Lassen #1) (Sulfolobus islandicus).